Reading from the N-terminus, the 605-residue chain is Glucose oxidase (605 aa).

The first 16 residues, 1–16 (MKTILSSSLVVSMAAA), serve as a signal peptide directing secretion. Residues Leu-51 and Thr-52 each contribute to the FAD site. The N-linked (GlcNAc...) asparagine glycan is linked to Asn-65. Glu-72 serves as a coordination point for FAD. Asn-111 carries N-linked (GlcNAc...) asparagine glycosylation. The FAD site is built by Ser-125, Asn-129, Gly-130, and Thr-132. Cys-186 and Cys-228 are disulfide-bonded. Asn-190 carries an N-linked (GlcNAc...) asparagine glycan. Val-272 lines the FAD pocket. Residues Asn-280, Asn-377, Asn-410, and Asn-495 are each glycosylated (N-linked (GlcNAc...) asparagine). His-538 functions as the Proton acceptor in the catalytic mechanism. O2 contacts are provided by Arg-559 and Val-560. Positions 571 and 583 each coordinate FAD.

The protein belongs to the GMC oxidoreductase family. Homodimer. The cofactor is FAD.

It localises to the secreted. The protein localises to the cell wall. It is found in the cytoplasm. Its subcellular location is the extracellular space. The protein resides in the extracellular matrix. The enzyme catalyses beta-D-glucose + O2 = D-glucono-1,5-lactone + H2O2. In terms of biological role, glucose oxidase catalyzes the oxidation of beta-D-glucose to D-glucono-delta-lactone and hydrogen peroxide in the presence of molecular oxygen. Acts as a critical factor modulating pathogenicity by controlling transcription of genes important for fungal secondary metabolism and infection such as those coding for enzymes involved in degradation of the host cell wall. This chain is Glucose oxidase, found in Aspergillus carbonarius (strain ITEM 5010).